The sequence spans 133 residues: ATP synthase epsilon chain, chloroplastic (133 aa).

This sequence belongs to the ATPase epsilon chain family. F-type ATPases have 2 components, CF(1) - the catalytic core - and CF(0) - the membrane proton channel. CF(1) has five subunits: alpha(3), beta(3), gamma(1), delta(1), epsilon(1). CF(0) has three main subunits: a, b and c.

The protein localises to the plastid. It localises to the chloroplast thylakoid membrane. Produces ATP from ADP in the presence of a proton gradient across the membrane. This chain is ATP synthase epsilon chain, chloroplastic, found in Citrus sinensis (Sweet orange).